Consider the following 378-residue polypeptide: Alanine racemase (378 aa).

Lys35 acts as the Proton acceptor; specific for D-alanine in catalysis. At Lys35 the chain carries N6-(pyridoxal phosphate)lysine. Arg133 contributes to the substrate binding site. The active-site Proton acceptor; specific for L-alanine is the Tyr266. Met314 is a binding site for substrate.

It belongs to the alanine racemase family. It depends on pyridoxal 5'-phosphate as a cofactor.

The catalysed reaction is L-alanine = D-alanine. It participates in amino-acid biosynthesis; D-alanine biosynthesis; D-alanine from L-alanine: step 1/1. Functionally, catalyzes the interconversion of L-alanine and D-alanine. May also act on other amino acids. The chain is Alanine racemase (alr) from Beutenbergia cavernae (strain ATCC BAA-8 / DSM 12333 / CCUG 43141 / JCM 11478 / NBRC 16432 / NCIMB 13614 / HKI 0122).